The sequence spans 525 residues: MRIFRFVKIVFTVIRFGLDEVMLSRIENPRVKLLLRITTIGRRFADPPAVRLRRALESLGPIFVKFGQVLSTRRDLLPVDFANELAKLQDQVPPFDSAVAIAIVEKSLGARIDVLFDEFERVPVASASIAQVHFAKLKQGEHKGKAVAVKVLRPNMLPVIDSDLALMRDIATWAERLWADGRRLKPREVVAEFDKYLHDELDLMREAANGSQLRRNFAGLDLLLVPEMFWDYSTPAVLVMERMTGVPISQVDTLRAAGVDIPKLAREGVEIFFTQVFRDGFFHADMHPGNIQVSLDPKHFGRYIALDFGIVGALSDFDKNYLAQNFLAFFKRDYHRVATLHLESGWVPPDTRVEELESAIRAVCEPYFDRALKDISLGQVLMRLFSTSRRFNVEIQPQLVLLQKTMLNVEGLGRSLDPELDLWKTAKPYLERWMTEQIGLRGWYERFKVEAPQWSKTLPQLPRLVHQALISHHEAPRAISDDLIRQILVEQRRTNRLLQALLVFGLAVGAGAVIARVLIVLAYGG.

Residues 118 to 500 (EFERVPVASA…QRRTNRLLQA (383 aa)) form the Protein kinase domain. ATP-binding positions include 124 to 132 (VASASIAQV) and K150. Catalysis depends on D285, which acts as the Proton acceptor. Residues 501 to 521 (LLVFGLAVGAGAVIARVLIVL) form a helical membrane-spanning segment.

It belongs to the ABC1 family. UbiB subfamily.

The protein localises to the cell inner membrane. The protein operates within cofactor biosynthesis; ubiquinone biosynthesis [regulation]. In terms of biological role, is probably a protein kinase regulator of UbiI activity which is involved in aerobic coenzyme Q (ubiquinone) biosynthesis. The protein is Probable protein kinase UbiB of Burkholderia mallei (strain SAVP1).